The sequence spans 238 residues: Dephospho-CoA kinase (238 aa).

Residues 3–233 (IIGLTGGVGT…QRPFASPPRA (231 aa)) enclose the DPCK domain. Position 11–16 (11–16 (GTGKST)) interacts with ATP. Disordered regions lie at residues 110–129 (HGVP…VGFS) and 219–238 (LASA…YSDG).

The protein belongs to the CoaE family.

The protein resides in the cytoplasm. The enzyme catalyses 3'-dephospho-CoA + ATP = ADP + CoA + H(+). It participates in cofactor biosynthesis; coenzyme A biosynthesis; CoA from (R)-pantothenate: step 5/5. In terms of biological role, catalyzes the phosphorylation of the 3'-hydroxyl group of dephosphocoenzyme A to form coenzyme A. The polypeptide is Dephospho-CoA kinase (Synechococcus sp. (strain JA-2-3B'a(2-13)) (Cyanobacteria bacterium Yellowstone B-Prime)).